A 926-amino-acid polypeptide reads, in one-letter code: Tyrosine-protein phosphatase non-receptor type 4 (926 aa).

In terms of domain architecture, FERM spans 29 to 312 (VVCNILLLDN…EHHTFFRLDR (284 aa)). Disordered stretches follow at residues 380 to 412 (DDRLETQSLPSRSPPGTPNHRNSTFTQEGTRLR) and 430 to 475 (EVFV…KNSW). 2 stretches are compositionally biased toward polar residues: residues 398–408 (NHRNSTFTQEG) and 430–456 (EVFVNQRSPSSTQANSIVLESSPSQET). Ser474 is subject to Phosphoserine. The PDZ domain occupies 517–589 (LIRMKPDENG…DQVVLFIKAS (73 aa)). In terms of domain architecture, Tyrosine-protein phosphatase spans 655–911 (VLTQFDQLYR…RFVCEAILKV (257 aa)). Substrate contacts are provided by residues Asp820, 852–858 (CSAGIGR), and Gln896. The Phosphocysteine intermediate role is filled by Cys852.

Belongs to the protein-tyrosine phosphatase family. Non-receptor class subfamily. As to quaternary structure, interacts with MAPK12 (via C-terminus); this interaction abolishes PTPN4 catalytic autoinhibition and thus activates the phosphatase activity. In terms of assembly, (Microbial infection) Interacts with attenuated rabies virus protein G; this interaction is required for virally-induced apoptosis. Post-translationally, highly phosphorylated on serine and threonine residues but not on tyrosines. Cleaved and activated by calpain I/CAPN1.

Its subcellular location is the cell membrane. It localises to the cytoplasm. The protein localises to the cytoskeleton. The catalysed reaction is O-phospho-L-tyrosyl-[protein] + H2O = L-tyrosyl-[protein] + phosphate. Phosphatase that plays a role in immunity, learning, synaptic plasticity or cell homeostasis. Regulates neuronal cell homeostasis by protecting neurons against apoptosis. Negatively regulates TLR4-induced interferon beta production by dephosphorylating adapter TICAM2 and inhibiting subsequent TRAM-TRIF interaction. Also dephosphorylates the immunoreceptor tyrosine-based activation motifs/ITAMs of the TCR zeta subunit and thereby negatively regulates TCR-mediated signaling pathway. May act at junctions between the membrane and the cytoskeleton. This Homo sapiens (Human) protein is Tyrosine-protein phosphatase non-receptor type 4 (PTPN4).